Here is a 362-residue protein sequence, read N- to C-terminus: ATP synthase F(1) complex catalytic subunit beta, mitochondrial (362 aa).

At K14 the chain carries N6-acetyllysine; alternate. Position 14 is an N6-succinyllysine; alternate (K14). N6-acetyllysine is present on K51. ADP is bound by residues V62, V63, G64, K65, T66, and V67. Residue V62 participates in ATP binding. Positions 62, 63, 64, 65, and 66 each coordinate phosphate. Residues G64, K65, T66, and V67 each contribute to the ATP site. A Mg(2+)-binding site is contributed by T66. Mg(2+) is bound at residue E91. An N6-acetyllysine; alternate mark is found at K112 and K117. Residues K112 and K117 each carry the N6-succinyllysine; alternate modification. The residue at position 165 (T165) is a Phosphothreonine. K279 bears the N6-acetyllysine mark. Position 286 is a phosphoserine (S286). K333 and K338 each carry N6-acetyllysine.

The protein belongs to the ATPase alpha/beta chains family. In terms of assembly, homotrimer. Component of the ATP synthase complex composed at least of ATP5F1A/subunit alpha, ATP5F1B/subunit beta, ATP5MC1/subunit c (homooctomer), MT-ATP6/subunit a, MT-ATP8/subunit 8, ATP5ME/subunit e, ATP5MF/subunit f, ATP5MG/subunit g, ATP5MK/subunit k, ATP5MJ/subunit j, ATP5F1C/subunit gamma, ATP5F1D/subunit delta, ATP5F1E/subunit epsilon, ATP5PF/subunit F6, ATP5PB/subunit b, ATP5PD/subunit d, ATP5PO/subunit OSCP. ATP synthase complex consists of a soluble F(1) head domain (subunits alpha(3) and beta(3)) - the catalytic core - and a membrane F(0) domain - the membrane proton channel (subunits c, a, 8, e, f, g, k and j). These two domains are linked by a central stalk (subunits gamma, delta, and epsilon) rotating inside the F1 region and a stationary peripheral stalk (subunits F6, b, d, and OSCP). Interacts with PPIF. Interacts with BCL2L1 isoform BCL-X(L); the interaction mediates the association of BCL2L1 isoform BCL-X(L) with the mitochondrial membrane F(1)F(0) ATP synthase and enhances neurons metabolic efficiency. Interacts with CLN5 and PPT1. Interacts with S100A1; this interaction increases F1-ATPase activity. Interacts with MTLN. Interacts with TTC5/STRAP; the interaction results in decreased mitochondrial ATP production.

It localises to the mitochondrion inner membrane. It carries out the reaction ATP + H2O + 4 H(+)(in) = ADP + phosphate + 5 H(+)(out). Functionally, catalytic subunit beta, of the mitochondrial membrane ATP synthase complex (F(1)F(0) ATP synthase or Complex V) that produces ATP from ADP in the presence of a proton gradient across the membrane which is generated by electron transport complexes of the respiratory chain. ATP synthase complex consist of a soluble F(1) head domain - the catalytic core - and a membrane F(1) domain - the membrane proton channel. These two domains are linked by a central stalk rotating inside the F(1) region and a stationary peripheral stalk. During catalysis, ATP synthesis in the catalytic domain of F(1) is coupled via a rotary mechanism of the central stalk subunits to proton translocation. In vivo, can only synthesize ATP although its ATP hydrolase activity can be activated artificially in vitro. With the subunit alpha (ATP5F1A), forms the catalytic core in the F(1) domain. This chain is ATP synthase F(1) complex catalytic subunit beta, mitochondrial, found in Mesocricetus auratus (Golden hamster).